A 144-amino-acid polypeptide reads, in one-letter code: Glycophorin-A (144 aa).

Residues 1-25 show a composition bias toward polar residues; the sequence is SSTTVPATHTSSSSLGPEQYVSSQS. The disordered stretch occupies residues 1–55; sequence SSTTVPATHTSSSSLGPEQYVSSQSNDKHTSDSHPTPTSAHEVTTEFSGRTHYPP. An O-linked (GalNAc...) serine glycan is attached at Ser2. 4 O-linked (GalNAc...) threonine glycosylation sites follow: Thr3, Thr4, Thr8, and Thr10. Ser11, Ser12, Ser13, Ser14, Ser22, and Ser23 each carry an O-linked (GalNAc...) serine glycan. Residues Thr30, Thr36, Thr38, Thr44, and Thr45 are each glycosylated (O-linked (GalNAc...) threonine). Over residues 33-48 the composition is skewed to polar residues; the sequence is SHPTPTSAHEVTTEFS. Ser48 carries O-linked (GalNAc...) serine glycosylation. Thr51 is a glycosylation site (O-linked (GalNAc...) threonine). A helical transmembrane segment spans residues 70–92; that stretch reads LVIALIIFGVMAGVIGTILFISY. The segment at 101-144 is disordered; that stretch reads SESDVQPLPPPDAEVPLSSVEIEDPEETDELNSFTKPNQERNES. Phosphoserine is present on Ser118. Over residues 121–130 the composition is skewed to acidic residues; the sequence is EIEDPEETDE.

This sequence belongs to the glycophorin-A family. As to quaternary structure, homodimer. Component of the ankyrin-1 complex in the erythrocyte, composed of ANK1, RHCE, RHAG, SLC4A1, EPB42, GYPA, GYPB and AQP1. Interacts with SLC4A1; a GYPA monomer is bound at each end of the SLC4A1 dimer forming a heterotetramer.

Its subcellular location is the membrane. Its function is as follows. Component of the ankyrin-1 complex, a multiprotein complex involved in the stability and shape of the erythrocyte membrane. Glycophorin A is the major intrinsic membrane protein of the erythrocyte. The N-terminal glycosylated segment, which lies outside the erythrocyte membrane, has MN blood group receptors. Appears to be important for the function of SLC4A1 and is required for high activity of SLC4A1. May be involved in translocation of SLC4A1 to the plasma membrane. This is Glycophorin-A from Macaca fuscata fuscata (Japanese macaque).